The following is a 361-amino-acid chain: Queuine tRNA-ribosyltransferase (361 aa).

Residue Asp92 is the Proton acceptor of the active site. Substrate is bound by residues 92 to 96 (DSGGF), Asp146, Gln189, and Gly216. The tract at residues 247 to 253 (GVGKPAD) is RNA binding. The active-site Nucleophile is the Asp266. Residues 271–275 (TRSGR) are RNA binding; important for wobble base 34 recognition. Zn(2+)-binding residues include Cys304, Cys306, Cys309, and His335.

It belongs to the queuine tRNA-ribosyltransferase family. As to quaternary structure, homodimer. Within each dimer, one monomer is responsible for RNA recognition and catalysis, while the other monomer binds to the replacement base PreQ1. It depends on Zn(2+) as a cofactor.

The enzyme catalyses 7-aminomethyl-7-carbaguanine + guanosine(34) in tRNA = 7-aminomethyl-7-carbaguanosine(34) in tRNA + guanine. The protein operates within tRNA modification; tRNA-queuosine biosynthesis. Functionally, catalyzes the base-exchange of a guanine (G) residue with the queuine precursor 7-aminomethyl-7-deazaguanine (PreQ1) at position 34 (anticodon wobble position) in tRNAs with GU(N) anticodons (tRNA-Asp, -Asn, -His and -Tyr). Catalysis occurs through a double-displacement mechanism. The nucleophile active site attacks the C1' of nucleotide 34 to detach the guanine base from the RNA, forming a covalent enzyme-RNA intermediate. The proton acceptor active site deprotonates the incoming PreQ1, allowing a nucleophilic attack on the C1' of the ribose to form the product. After dissociation, two additional enzymatic reactions on the tRNA convert PreQ1 to queuine (Q), resulting in the hypermodified nucleoside queuosine (7-(((4,5-cis-dihydroxy-2-cyclopenten-1-yl)amino)methyl)-7-deazaguanosine). The sequence is that of Queuine tRNA-ribosyltransferase from Rickettsia akari (strain Hartford).